A 175-amino-acid polypeptide reads, in one-letter code: Transcription factor HES-3 (175 aa).

Residues 1 to 49 (MEKKRRARINVSLEQLRSLLERHYSHQIRKRKLEKADILELSVKYMRSL) form the bHLH domain. The region spanning 65 to 98 (YPSGFQGGLRGVSQRLRPGEGDSGLRCPLLLQRR) is the Orange domain. The segment at 126–166 (RAAGGSHSPQSPLPLPGGLLESSTDVVAPHPASNCQAESTR) is disordered. The segment covering 129–148 (GGSHSPQSPLPLPGGLLESS) has biased composition (low complexity). The WRPW motif signature appears at 172 to 175 (WRPW).

In terms of assembly, transcription repression requires formation of a complex with a corepressor protein of the Groucho/TLE family.

It is found in the nucleus. Transcriptional repressor of genes that require a bHLH protein for their transcription. The polypeptide is Transcription factor HES-3 (Hes3) (Mus musculus (Mouse)).